Here is a 404-residue protein sequence, read N- to C-terminus: NADH-quinone oxidoreductase subunit D 2 (404 aa).

Belongs to the complex I 49 kDa subunit family. As to quaternary structure, NDH-1 is composed of 14 different subunits. Subunits NuoB, C, D, E, F, and G constitute the peripheral sector of the complex.

The protein resides in the cell inner membrane. It carries out the reaction a quinone + NADH + 5 H(+)(in) = a quinol + NAD(+) + 4 H(+)(out). In terms of biological role, NDH-1 shuttles electrons from NADH, via FMN and iron-sulfur (Fe-S) centers, to quinones in the respiratory chain. The immediate electron acceptor for the enzyme in this species is believed to be ubiquinone. Couples the redox reaction to proton translocation (for every two electrons transferred, four hydrogen ions are translocated across the cytoplasmic membrane), and thus conserves the redox energy in a proton gradient. The chain is NADH-quinone oxidoreductase subunit D 2 from Sinorhizobium medicae (strain WSM419) (Ensifer medicae).